The primary structure comprises 219 residues: Small ribosomal subunit protein uS3 (219 aa).

Residues Val-38–Lys-106 enclose the KH type-2 domain.

This sequence belongs to the universal ribosomal protein uS3 family. In terms of assembly, part of the 30S ribosomal subunit. Forms a tight complex with proteins S10 and S14.

Its function is as follows. Binds the lower part of the 30S subunit head. Binds mRNA in the 70S ribosome, positioning it for translation. This Desulfitobacterium hafniense (strain DSM 10664 / DCB-2) protein is Small ribosomal subunit protein uS3.